Consider the following 231-residue polypeptide: NADH-quinone oxidoreductase subunit C (231 aa).

Belongs to the complex I 30 kDa subunit family. In terms of assembly, NDH-1 is composed of 14 different subunits. Subunits NuoB, C, D, E, F, and G constitute the peripheral sector of the complex.

The protein resides in the cell membrane. The catalysed reaction is a quinone + NADH + 5 H(+)(in) = a quinol + NAD(+) + 4 H(+)(out). In terms of biological role, NDH-1 shuttles electrons from NADH, via FMN and iron-sulfur (Fe-S) centers, to quinones in the respiratory chain. The immediate electron acceptor for the enzyme in this species is believed to be a menaquinone. Couples the redox reaction to proton translocation (for every two electrons transferred, four hydrogen ions are translocated across the cytoplasmic membrane), and thus conserves the redox energy in a proton gradient. The chain is NADH-quinone oxidoreductase subunit C from Mycobacterium sp. (strain JLS).